Consider the following 162-residue polypeptide: MTVSREEISTILDDALFLPVKLYSLKVNQRPNHSLIEVVLDNLEHPYGSVSLLECEQVSRKLKEELERISPDLDFTLKVSSAGAERKLHLPEDIDRFRGIPVRLVFRSGESEKNQEGIFRIVNRDGDQVFLEKFQKGKKSAVKKQTTLNLKDILKGNLYVSI.

It belongs to the RimP family.

It is found in the cytoplasm. Required for maturation of 30S ribosomal subunits. This chain is Ribosome maturation factor RimP, found in Leptospira borgpetersenii serovar Hardjo-bovis (strain JB197).